Reading from the N-terminus, the 456-residue chain is Solute carrier family 38 member 6 (456 aa).

Met1 carries the post-translational modification N-acetylmethionine. Phosphoserine occurs at positions 4 and 7. The next 5 membrane-spanning stretches (helical) occupy residues 42–62 (SPGV…MGSG), 85–105 (VALL…QTAV), 111–131 (LGLF…IIIQ), 170–190 (LLII…KIGF), and 191–211 (LGYT…VVII). A disulfide bond links Cys218 and Cys238. N-linked (GlcNAc...) asparagine glycosylation is present at Asn233. Residues 250–270 (AYALPTMAFSFLCHTSILPIY) traverse the membrane as a helical segment. N-linked (GlcNAc...) asparagine glycosylation is present at Asn283. 5 helical membrane passes run 288–308 (AIAL…LTFY), 327–347 (VVVM…VPLI), 371–391 (FLIT…VPDI), 394–414 (VFGV…PGLF), and 431–451 (AFVL…LIIF).

This sequence belongs to the amino acid/polyamine transporter 2 family.

It localises to the cell membrane. The protein localises to the synapse. It carries out the reaction L-glutamine(out) = L-glutamine(in). It catalyses the reaction L-glutamate(out) = L-glutamate(in). Amino acid transporter with an apparent selectivity for L-glutamine and L-glutamate. May facilitate glutamine uptake in excitatory neurons. The transport mechanism remains to be elucidated. This Homo sapiens (Human) protein is Solute carrier family 38 member 6.